Consider the following 258-residue polypeptide: Acetylglutamate kinase (258 aa).

Residues 44–45, arginine 66, and asparagine 158 each bind substrate; that span reads GG. ATP is bound by residues 181–186 and 209–211; these read DVSGIL and IIT.

It belongs to the acetylglutamate kinase family. ArgB subfamily. In terms of assembly, homodimer.

Its subcellular location is the cytoplasm. The catalysed reaction is N-acetyl-L-glutamate + ATP = N-acetyl-L-glutamyl 5-phosphate + ADP. Its pathway is amino-acid biosynthesis; L-arginine biosynthesis; N(2)-acetyl-L-ornithine from L-glutamate: step 2/4. Catalyzes the ATP-dependent phosphorylation of N-acetyl-L-glutamate. The polypeptide is Acetylglutamate kinase (Yersinia pestis bv. Antiqua (strain Antiqua)).